The following is a 347-amino-acid chain: GMP reductase (347 aa).

NADP(+) is bound at residue 108–131; that stretch reads DDFTKTRQILAMSTALRFICVDVA. 2 residues coordinate K(+): Gly181 and Gly183. Catalysis depends on Cys186, which acts as the Thioimidate intermediate. 216-239 is an NADP(+) binding site; sequence IVGDGGCTCPGDVAKAFGGGADFV.

It belongs to the IMPDH/GMPR family. GuaC type 1 subfamily. Homotetramer.

The enzyme catalyses IMP + NH4(+) + NADP(+) = GMP + NADPH + 2 H(+). Catalyzes the irreversible NADPH-dependent deamination of GMP to IMP. It functions in the conversion of nucleobase, nucleoside and nucleotide derivatives of G to A nucleotides, and in maintaining the intracellular balance of A and G nucleotides. This is GMP reductase from Aeromonas salmonicida (strain A449).